The following is a 139-amino-acid chain: uncharacterized protein (139 aa).

The disordered stretch occupies residues 83–109; sequence LIPPKKTSPATSSSLKPPRRPRGCLNG. The segment covering 86 to 98 has biased composition (low complexity); sequence PKKTSPATSSSLK.

This sequence to M.pneumoniae MPN_091 and MPN_463.

This is an uncharacterized protein from Mycoplasma pneumoniae (strain ATCC 29342 / M129 / Subtype 1) (Mycoplasmoides pneumoniae).